The chain runs to 554 residues: Glucose-6-phosphate isomerase (554 aa).

Glu359 functions as the Proton donor in the catalytic mechanism. Catalysis depends on residues His390 and Lys518.

The protein belongs to the GPI family.

It localises to the cytoplasm. It carries out the reaction alpha-D-glucose 6-phosphate = beta-D-fructose 6-phosphate. The protein operates within carbohydrate biosynthesis; gluconeogenesis. Its pathway is carbohydrate degradation; glycolysis; D-glyceraldehyde 3-phosphate and glycerone phosphate from D-glucose: step 2/4. Catalyzes the reversible isomerization of glucose-6-phosphate to fructose-6-phosphate. This chain is Glucose-6-phosphate isomerase, found in Pseudomonas entomophila (strain L48).